Here is a 191-residue protein sequence, read N- to C-terminus: HTH-type transcriptional regulator SAR0097 (191 aa).

Positions 12–74 (AEYNQQIILT…AIMDKKVDQM (63 aa)) constitute an HTH tetR-type domain. Residues 37 to 56 (KMSDIAKISGVGVGTLYRHF) constitute a DNA-binding region (H-T-H motif).

The sequence is that of HTH-type transcriptional regulator SAR0097 from Staphylococcus aureus (strain MRSA252).